We begin with the raw amino-acid sequence, 1252 residues long: Guanine nucleotide exchange factor SDC25 (1252 aa).

In terms of domain architecture, SH3 spans Gln26 to Asn97. Disordered stretches follow at residues Ile409 to Trp454 and Leu623 to Glu648. Positions Thr416–Ser428 are enriched in low complexity. In terms of domain architecture, N-terminal Ras-GEF spans Ser782–Lys914. One can recognise a Ras-GEF domain in the interval Asp952–Lys1199. The segment at Arg1201–Lys1252 is disordered. Over residues Ser1214 to Ser1236 the composition is skewed to basic and acidic residues. Over residues Gln1239 to Lys1252 the composition is skewed to basic residues.

Functionally, promotes the exchange of Ras-bound GDP by GTP. This is Guanine nucleotide exchange factor SDC25 (SDC25) from Saccharomyces cerevisiae (strain RM11-1a) (Baker's yeast).